The sequence spans 373 residues: Histidinol-phosphate aminotransferase (373 aa).

An N6-(pyridoxal phosphate)lysine modification is found at Lys233.

This sequence belongs to the class-II pyridoxal-phosphate-dependent aminotransferase family. Histidinol-phosphate aminotransferase subfamily. As to quaternary structure, homodimer. Pyridoxal 5'-phosphate is required as a cofactor.

The enzyme catalyses L-histidinol phosphate + 2-oxoglutarate = 3-(imidazol-4-yl)-2-oxopropyl phosphate + L-glutamate. It participates in amino-acid biosynthesis; L-histidine biosynthesis; L-histidine from 5-phospho-alpha-D-ribose 1-diphosphate: step 7/9. This is Histidinol-phosphate aminotransferase from Nitratidesulfovibrio vulgaris (strain ATCC 29579 / DSM 644 / CCUG 34227 / NCIMB 8303 / VKM B-1760 / Hildenborough) (Desulfovibrio vulgaris).